Here is a 248-residue protein sequence, read N- to C-terminus: Phosphate import ATP-binding protein PstB (248 aa).

The ABC transporter domain maps to 1 to 243 (MAVNDVNVFY…PQHNLTQGYI (243 aa)). 33–40 (GPSGCGKS) contacts ATP.

This sequence belongs to the ABC transporter superfamily. Phosphate importer (TC 3.A.1.7) family. As to quaternary structure, the complex is composed of two ATP-binding proteins (PstB), two transmembrane proteins (PstC and PstA) and a solute-binding protein (PstS).

It is found in the cell inner membrane. The enzyme catalyses phosphate(out) + ATP + H2O = ADP + 2 phosphate(in) + H(+). In terms of biological role, part of the ABC transporter complex PstSACB involved in phosphate import. Responsible for energy coupling to the transport system. The polypeptide is Phosphate import ATP-binding protein PstB (Rhodospirillum rubrum (strain ATCC 11170 / ATH 1.1.1 / DSM 467 / LMG 4362 / NCIMB 8255 / S1)).